The sequence spans 228 residues: UPF0173 metal-dependent hydrolase Tpen_1493 (228 aa).

It belongs to the UPF0173 family.

The polypeptide is UPF0173 metal-dependent hydrolase Tpen_1493 (Thermofilum pendens (strain DSM 2475 / Hrk 5)).